We begin with the raw amino-acid sequence, 617 residues long: Ceramide transfer protein (617 aa).

A compositionally biased stretch (polar residues) spans M1 to G11. Residues M1–P23 are disordered. A PH domain is found at P23 to S117. Residues R268–H302 are a coiled coil. The FFAT signature appears at E320–E326. The tract at residues E341–S382 is disordered. One can recognise an START domain in the interval D383 to A611. Positions 466, 487, 524, and 572 each coordinate an N-acylsphing-4-enine.

It localises to the cytoplasm. The protein localises to the golgi apparatus. The protein resides in the endoplasmic reticulum. The catalysed reaction is N-hexadecanoylsphing-4-enine(in) = N-hexadecanoylsphing-4-enine(out). Its function is as follows. May mediate the intracellular trafficking of ceramide in a non-vesicular manner. This chain is Ceramide transfer protein (cert1), found in Xenopus laevis (African clawed frog).